The primary structure comprises 763 residues: Translation initiation factor IF-2, chloroplastic (763 aa).

Disordered regions lie at residues 1 to 22 (MFLN…NNSS), 52 to 122 (IDKS…SNSA), and 149 to 168 (NNKI…DQSI). Residues 13-22 (SSYSTNNNSS) show a composition bias toward low complexity. Basic and acidic residues predominate over residues 73 to 92 (RIDKKNKNFNKAHDLLDNKK). Residues 93–104 (NKNRQRKKIKNK) show a composition bias toward basic residues. Residues 151-168 (KIPQQKKQQVASSIDQSI) show a composition bias toward polar residues. In terms of domain architecture, tr-type G spans 261 to 429 (NRPPVVTILG…ILLLAELENL (169 aa)). GTP contacts are provided by residues 270–277 (GHVDHGKT), 316–320 (DTPGH), and 370–373 (SKID).

This sequence belongs to the TRAFAC class translation factor GTPase superfamily. Classic translation factor GTPase family. IF-2 subfamily.

It is found in the plastid. It localises to the chloroplast. Its function is as follows. One of the essential components for the initiation of protein synthesis. Protects formylmethionyl-tRNA from spontaneous hydrolysis and promotes its binding to the 30S ribosomal subunits. Also involved in the hydrolysis of GTP during the formation of the 70S ribosomal complex. The sequence is that of Translation initiation factor IF-2, chloroplastic (infB) from Porphyra purpurea (Red seaweed).